A 160-amino-acid polypeptide reads, in one-letter code: Ribosomal RNA large subunit methyltransferase H (160 aa).

S-adenosyl-L-methionine-binding positions include Leu76, Gly108, and 127 to 132; that span reads LGKMTW.

It belongs to the RNA methyltransferase RlmH family. In terms of assembly, homodimer.

Its subcellular location is the cytoplasm. The catalysed reaction is pseudouridine(1915) in 23S rRNA + S-adenosyl-L-methionine = N(3)-methylpseudouridine(1915) in 23S rRNA + S-adenosyl-L-homocysteine + H(+). Functionally, specifically methylates the pseudouridine at position 1915 (m3Psi1915) in 23S rRNA. The protein is Ribosomal RNA large subunit methyltransferase H of Sinorhizobium fredii (strain NBRC 101917 / NGR234).